We begin with the raw amino-acid sequence, 437 residues long: Enolase 2 (437 aa).

Substrate contacts are provided by His-160 and Glu-169. Glu-212 (proton donor) is an active-site residue. Mg(2+) contacts are provided by Asp-247, Glu-296, and Asp-321. 2 residues coordinate substrate: Glu-296 and Asp-321. Residue Lys-346 is the Proton acceptor of the active site. Substrate is bound by residues 373–376 (SHRS) and Lys-397.

Belongs to the enolase family. As to quaternary structure, homodimer. Mg(2+) serves as cofactor.

It is found in the cytoplasm. The catalysed reaction is (2R)-2-phosphoglycerate = phosphoenolpyruvate + H2O. It functions in the pathway carbohydrate degradation; glycolysis; pyruvate from D-glyceraldehyde 3-phosphate: step 4/5. The sequence is that of Enolase 2 (ENO2) from Candida glabrata (strain ATCC 2001 / BCRC 20586 / JCM 3761 / NBRC 0622 / NRRL Y-65 / CBS 138) (Yeast).